A 965-amino-acid polypeptide reads, in one-letter code: Glycine dehydrogenase (decarboxylating) 1 (965 aa).

Lys-713 carries the N6-(pyridoxal phosphate)lysine modification.

The protein belongs to the GcvP family. The glycine cleavage system is composed of four proteins: P, T, L and H. Pyridoxal 5'-phosphate serves as cofactor.

It catalyses the reaction N(6)-[(R)-lipoyl]-L-lysyl-[glycine-cleavage complex H protein] + glycine + H(+) = N(6)-[(R)-S(8)-aminomethyldihydrolipoyl]-L-lysyl-[glycine-cleavage complex H protein] + CO2. The glycine cleavage system catalyzes the degradation of glycine. The P protein binds the alpha-amino group of glycine through its pyridoxal phosphate cofactor; CO(2) is released and the remaining methylamine moiety is then transferred to the lipoamide cofactor of the H protein. The chain is Glycine dehydrogenase (decarboxylating) 1 from Colwellia psychrerythraea (strain 34H / ATCC BAA-681) (Vibrio psychroerythus).